Consider the following 377-residue polypeptide: Alanine racemase, catabolic (377 aa).

Lysine 51 (proton acceptor; specific for D-alanine) is an active-site residue. An N6-(pyridoxal phosphate)lysine modification is found at lysine 51. Residue arginine 150 participates in substrate binding. Tyrosine 272 acts as the Proton acceptor; specific for L-alanine in catalysis. Residue methionine 320 participates in substrate binding.

It belongs to the alanine racemase family. Pyridoxal 5'-phosphate serves as cofactor.

The enzyme catalyses L-alanine = D-alanine. Isomerizes L-alanine to D-alanine which is then oxidized to pyruvate by DadA. The protein is Alanine racemase, catabolic (dadX) of Rhizobium johnstonii (strain DSM 114642 / LMG 32736 / 3841) (Rhizobium leguminosarum bv. viciae).